The following is a 337-amino-acid chain: MIREKVTVSTRTLQWKCVESRTDSKRLYYGRFILSPLMKGQADTIGIAMRRALLGEIEGTCITRVKSEKAPHEYSTIAGIQESVHEILMNLKEIVLRSNLYGTCDASICVKGPGCVTAEDIILPPSVEIVDNTQHIAWLTEPIDFCIGLQIERNRGYILKTHHNFEDGSYPIDAVFMPVRNANHSIHSYGNGNEKQEILFLEIWTNGSLTPKEALHEASRNLIDLFIPFLHMEEENLHLEDGEHTIPLSPLSFHDKVAKLRKNKKKLALKSIFIDQLEFPPKIYNCLKKSNISTLLDLLNKSQEDLMKIEHFHIEDVKQILGILEKHFAIDLPKNQF.

Positions 1–233 (MIREKVTVST…DLFIPFLHME (233 aa)) are alpha N-terminal domain (alpha-NTD). The alpha C-terminal domain (alpha-CTD) stretch occupies residues 266 to 337 (KLALKSIFID…FAIDLPKNQF (72 aa)).

Belongs to the RNA polymerase alpha chain family. In terms of assembly, in plastids the minimal PEP RNA polymerase catalytic core is composed of four subunits: alpha, beta, beta', and beta''. When a (nuclear-encoded) sigma factor is associated with the core the holoenzyme is formed, which can initiate transcription.

The protein resides in the plastid. Its subcellular location is the chloroplast. The catalysed reaction is RNA(n) + a ribonucleoside 5'-triphosphate = RNA(n+1) + diphosphate. In terms of biological role, DNA-dependent RNA polymerase catalyzes the transcription of DNA into RNA using the four ribonucleoside triphosphates as substrates. This is DNA-directed RNA polymerase subunit alpha from Ipomoea purpurea (Common morning glory).